Consider the following 387-residue polypeptide: Glutamate N-acetyltransferase (387 aa).

Substrate is bound by residues T140, K162, T173, E257, N382, and T387. The Nucleophile role is filled by T173.

The protein belongs to the ArgJ family. In terms of assembly, heterotetramer of two alpha and two beta chains.

Its subcellular location is the cytoplasm. It carries out the reaction N(2)-acetyl-L-ornithine + L-glutamate = N-acetyl-L-glutamate + L-ornithine. Its pathway is amino-acid biosynthesis; L-arginine biosynthesis; L-ornithine and N-acetyl-L-glutamate from L-glutamate and N(2)-acetyl-L-ornithine (cyclic): step 1/1. In terms of biological role, catalyzes the transfer of the acetyl group from N(2)-acetylornithine to glutamate, forming N-acetylglutamate and L-ornithine. This chain is Glutamate N-acetyltransferase, found in Methanopyrus kandleri (strain AV19 / DSM 6324 / JCM 9639 / NBRC 100938).